A 308-amino-acid polypeptide reads, in one-letter code: Porphobilinogen deaminase (308 aa).

Cys-241 carries the post-translational modification S-(dipyrrolylmethanemethyl)cysteine.

Belongs to the HMBS family. Monomer. It depends on dipyrromethane as a cofactor.

The catalysed reaction is 4 porphobilinogen + H2O = hydroxymethylbilane + 4 NH4(+). It participates in porphyrin-containing compound metabolism; protoporphyrin-IX biosynthesis; coproporphyrinogen-III from 5-aminolevulinate: step 2/4. In terms of biological role, tetrapolymerization of the monopyrrole PBG into the hydroxymethylbilane pre-uroporphyrinogen in several discrete steps. In Staphylococcus aureus (strain MSSA476), this protein is Porphobilinogen deaminase.